The chain runs to 147 residues: Alpha-amylase/trypsin inhibitor (147 aa).

An N-terminal signal peptide occupies residues 1–21 (MASDHRRFVLSGAVLLSVLAV).

It belongs to the protease inhibitor I6 (cereal trypsin/alpha-amylase inhibitor) family. In terms of processing, five disulfide bonds, which are essential for the inhibitor activity, are probably present. Endosperm.

It is found in the secreted. Its function is as follows. Alpha-amylase/trypsin inhibitor. The polypeptide is Alpha-amylase/trypsin inhibitor (Hordeum vulgare (Barley)).